The chain runs to 281 residues: 2-dehydro-3-deoxyphosphooctonate aldolase (281 aa).

This sequence belongs to the KdsA family.

The protein resides in the cytoplasm. The catalysed reaction is D-arabinose 5-phosphate + phosphoenolpyruvate + H2O = 3-deoxy-alpha-D-manno-2-octulosonate-8-phosphate + phosphate. The protein operates within carbohydrate biosynthesis; 3-deoxy-D-manno-octulosonate biosynthesis; 3-deoxy-D-manno-octulosonate from D-ribulose 5-phosphate: step 2/3. Its pathway is bacterial outer membrane biogenesis; lipopolysaccharide biosynthesis. The chain is 2-dehydro-3-deoxyphosphooctonate aldolase from Ectopseudomonas mendocina (strain ymp) (Pseudomonas mendocina).